The chain runs to 161 residues: Nucleotide-binding protein XOO0647 (161 aa).

This sequence belongs to the YajQ family.

Its function is as follows. Nucleotide-binding protein. The protein is Nucleotide-binding protein XOO0647 of Xanthomonas oryzae pv. oryzae (strain MAFF 311018).